The following is a 270-amino-acid chain: Ethanolamine ammonia-lyase small subunit (270 aa).

Adenosylcob(III)alamin is bound by residues valine 161, glutamate 182, and cysteine 211.

The protein belongs to the EutC family. The basic unit is a heterodimer which dimerizes to form tetramers. The heterotetramers trimerize; 6 large subunits form a core ring with 6 small subunits projecting outwards. It depends on adenosylcob(III)alamin as a cofactor.

The protein localises to the bacterial microcompartment. It carries out the reaction ethanolamine = acetaldehyde + NH4(+). Its pathway is amine and polyamine degradation; ethanolamine degradation. Functionally, catalyzes the deamination of various vicinal amino-alcohols to oxo compounds. Allows this organism to utilize ethanolamine as the sole source of nitrogen and carbon in the presence of external vitamin B12. This chain is Ethanolamine ammonia-lyase small subunit, found in Azotobacter vinelandii (strain DJ / ATCC BAA-1303).